Here is a 156-residue protein sequence, read N- to C-terminus: PopC secretion inhibitor (156 aa).

The segment at 1-89 (MNPGSAPWER…PVRSRAEVHQ (89 aa)) is disordered. The segment covering 8–28 (WERRTRERMRAMSRKNGEWGD) has biased composition (basic and acidic residues).

As to quaternary structure, interacts with PopC in non-starving cells.

It is found in the cytoplasm. In response to starvation, RelA is activated resulting in the accumulation of (p)ppGpp, which causes the degradation of PopD in an FtsH(D)-dependent manner, thereby releasing pre-formed PopC for secretion. Its function is as follows. Inhibitor of protease PopC. In non-starving cells, forms a cytoplasmic complex with PopC and inhibits PopC secretion and activity. This chain is PopC secretion inhibitor, found in Myxococcus xanthus (strain DK1622).